The chain runs to 910 residues: Protein translocase subunit SecA (910 aa).

ATP contacts are provided by residues Gln-89, 107–111 (GEGKT), and Asp-502. 4 residues coordinate Zn(2+): Cys-894, Cys-896, Cys-905, and His-906.

It belongs to the SecA family. Monomer and homodimer. Part of the essential Sec protein translocation apparatus which comprises SecA, SecYEG and auxiliary proteins SecDF-YajC and YidC. Zn(2+) serves as cofactor.

It is found in the cell inner membrane. The protein resides in the cytoplasm. The enzyme catalyses ATP + H2O + cellular proteinSide 1 = ADP + phosphate + cellular proteinSide 2.. Part of the Sec protein translocase complex. Interacts with the SecYEG preprotein conducting channel. Has a central role in coupling the hydrolysis of ATP to the transfer of proteins into and across the cell membrane, serving both as a receptor for the preprotein-SecB complex and as an ATP-driven molecular motor driving the stepwise translocation of polypeptide chains across the membrane. In Mesorhizobium japonicum (strain LMG 29417 / CECT 9101 / MAFF 303099) (Mesorhizobium loti (strain MAFF 303099)), this protein is Protein translocase subunit SecA.